A 319-amino-acid chain; its full sequence is tRNA(Ile)-lysidine synthase (319 aa).

Position 32-37 (32-37 (SGGSDS)) interacts with ATP.

It belongs to the tRNA(Ile)-lysidine synthase family.

Its subcellular location is the cytoplasm. The catalysed reaction is cytidine(34) in tRNA(Ile2) + L-lysine + ATP = lysidine(34) in tRNA(Ile2) + AMP + diphosphate + H(+). Ligates lysine onto the cytidine present at position 34 of the AUA codon-specific tRNA(Ile) that contains the anticodon CAU, in an ATP-dependent manner. Cytidine is converted to lysidine, thus changing the amino acid specificity of the tRNA from methionine to isoleucine. The chain is tRNA(Ile)-lysidine synthase from Chlamydia pneumoniae (Chlamydophila pneumoniae).